Reading from the N-terminus, the 417-residue chain is UDP-N-acetylglucosamine 1-carboxyvinyltransferase (417 aa).

Residue 22–23 coordinates phosphoenolpyruvate; it reads KN. Arg94 contacts UDP-N-acetyl-alpha-D-glucosamine. Cys118 (proton donor) is an active-site residue. Cys118 carries the 2-(S-cysteinyl)pyruvic acid O-phosphothioketal modification. Residues 123–127, Asp306, and Ile328 contribute to the UDP-N-acetyl-alpha-D-glucosamine site; that span reads RPIDQ.

It belongs to the EPSP synthase family. MurA subfamily.

The protein localises to the cytoplasm. It carries out the reaction phosphoenolpyruvate + UDP-N-acetyl-alpha-D-glucosamine = UDP-N-acetyl-3-O-(1-carboxyvinyl)-alpha-D-glucosamine + phosphate. It functions in the pathway cell wall biogenesis; peptidoglycan biosynthesis. Its function is as follows. Cell wall formation. Adds enolpyruvyl to UDP-N-acetylglucosamine. The sequence is that of UDP-N-acetylglucosamine 1-carboxyvinyltransferase from Clostridium botulinum (strain ATCC 19397 / Type A).